Here is a 320-residue protein sequence, read N- to C-terminus: Acetyl-coenzyme A carboxylase carboxyl transferase subunit alpha (320 aa).

One can recognise a CoA carboxyltransferase C-terminal domain in the interval 42–295; sequence IEDKAKAALH…GDAIAQAFSD (254 aa).

It belongs to the AccA family. Acetyl-CoA carboxylase is a heterohexamer composed of biotin carboxyl carrier protein (AccB), biotin carboxylase (AccC) and two subunits each of ACCase subunit alpha (AccA) and ACCase subunit beta (AccD).

The protein localises to the cytoplasm. The enzyme catalyses N(6)-carboxybiotinyl-L-lysyl-[protein] + acetyl-CoA = N(6)-biotinyl-L-lysyl-[protein] + malonyl-CoA. It participates in lipid metabolism; malonyl-CoA biosynthesis; malonyl-CoA from acetyl-CoA: step 1/1. Component of the acetyl coenzyme A carboxylase (ACC) complex. First, biotin carboxylase catalyzes the carboxylation of biotin on its carrier protein (BCCP) and then the CO(2) group is transferred by the carboxyltransferase to acetyl-CoA to form malonyl-CoA. This Afipia carboxidovorans (strain ATCC 49405 / DSM 1227 / KCTC 32145 / OM5) (Oligotropha carboxidovorans) protein is Acetyl-coenzyme A carboxylase carboxyl transferase subunit alpha.